A 579-amino-acid chain; its full sequence is Zinc finger-containing ubiquitin peptidase 1 (579 aa).

The segment at 2 to 25 adopts a C2H2-type 1 zinc-finger fold; that stretch reads LSCDICGETVSSEPDMKAHLLIVH. Residues 30 to 53 form a C2H2-type 2; atypical zinc finger; that stretch reads VICPFCKLSGVNYDEMCFHIETAH. 2 consecutive C2H2-type zinc fingers follow at residues 155–178 and 194–216; these read PECP…KTKH and YDCP…VDLH. Positions 227–249 are MIU; sequence NRVQCSRDLELAQQLQQEEDRKR. Residues 250 to 275 form a zUBD/ZHA region; sequence RSEESRQEMEEFQKLQRQYGLDNSGG. Lys-263 bears the N6-acetyllysine mark. Cys-361 (nucleophile) is an active-site residue. The active-site Proton acceptor is the His-492. Asp-513 is a catalytic residue.

Belongs to the peptidase C78 family. ZUFSP subfamily. Interacts with RPA1 and RPA2.

It localises to the cytoplasm. The protein resides in the nucleus. It carries out the reaction Thiol-dependent hydrolysis of ester, thioester, amide, peptide and isopeptide bonds formed by the C-terminal Gly of ubiquitin (a 76-residue protein attached to proteins as an intracellular targeting signal).. Deubiquitinase with endodeubiquitinase activity that specifically interacts with and cleaves 'Lys-63'-linked long polyubiquitin chains. Shows only weak activity against 'Lys-11' and 'Lys-48'-linked chains. Plays an important role in genome stability pathways, functioning to prevent spontaneous DNA damage and also promote cellular survival in response to exogenous DNA damage. Modulates the ubiquitination status of replication protein A (RPA) complex proteins in response to replication stress. The chain is Zinc finger-containing ubiquitin peptidase 1 from Bos taurus (Bovine).